The chain runs to 215 residues: MALQQYNKFPFFFSGILGPTRLNGLQMPPIQTMVRWGHQYAPRSIRNQKAQKGRVPIPIGGSLRGTQLEWGEYGMRLKDRSIRFHAKQLETAEQILKRILKPIKAARVYTRFCCNVPVCVKGNETRMGKGKGAFEYWAARIPIGRVLFEIGGDGMRKELAEHALKQAAFHLPGKYEIIVKQTPKRLGTTLIHETPITTETSKMNYQEITSTTTAV.

A mitochondrion-targeting transit peptide spans 1–36; sequence MALQQYNKFPFFFSGILGPTRLNGLQMPPIQTMVRW.

The protein belongs to the universal ribosomal protein uL16 family. Component of the mitochondrial large ribosomal subunit (mt-LSU). Mature yeast 74S mitochondrial ribosomes consist of a small (37S) and a large (54S) subunit. The 37S small subunit contains a 15S ribosomal RNA (15S mt-rRNA) and at least 32 different proteins. The 54S large subunit contains a 21S rRNA (21S mt-rRNA) and at least 45 different proteins.

It localises to the mitochondrion. Component of the mitochondrial ribosome (mitoribosome), a dedicated translation machinery responsible for the synthesis of mitochondrial genome-encoded proteins, including at least some of the essential transmembrane subunits of the mitochondrial respiratory chain. The mitoribosomes are attached to the mitochondrial inner membrane and translation products are cotranslationally integrated into the membrane. This is Large ribosomal subunit protein uL16m (mrpl16) from Schizosaccharomyces pombe (strain 972 / ATCC 24843) (Fission yeast).